The sequence spans 714 residues: Epithelial splicing regulatory protein 1 (714 aa).

RRM domains follow at residues 225–302 (TVIR…KATG), 326–406 (IIVR…KSTA), and 450–530 (DCVR…ACSA).

Belongs to the ESRP family.

The protein resides in the nucleus. In terms of biological role, mRNA splicing factor that regulates the formation of epithelial cell-specific isoforms. Specifically regulates the expression of FGFR2-IIIb, an epithelial cell-specific isoform of fgfr2. Acts by directly binding specific sequences in mRNAs. Binds the GU-rich sequence motifs in the ISE/ISS-3, a cis-element regulatory region present in the mRNA of fgfr2. The polypeptide is Epithelial splicing regulatory protein 1 (esrp1) (Danio rerio (Zebrafish)).